The chain runs to 142 residues: Large ribosomal subunit protein uL13 (142 aa).

Belongs to the universal ribosomal protein uL13 family. As to quaternary structure, part of the 50S ribosomal subunit.

Its function is as follows. This protein is one of the early assembly proteins of the 50S ribosomal subunit, although it is not seen to bind rRNA by itself. It is important during the early stages of 50S assembly. This is Large ribosomal subunit protein uL13 from Burkholderia mallei (strain NCTC 10247).